Reading from the N-terminus, the 269-residue chain is Phosphate import ATP-binding protein PstB 1 (269 aa).

In terms of domain architecture, ABC transporter spans 16–255 (FTTQNLDIYY…DRTGKVFGDP (240 aa)). An ATP-binding site is contributed by 48–55 (GPSGCGKS).

This sequence belongs to the ABC transporter superfamily. Phosphate importer (TC 3.A.1.7) family. In terms of assembly, the complex is composed of two ATP-binding proteins (PstB), two transmembrane proteins (PstC and PstA) and a solute-binding protein (PstS).

Its subcellular location is the cell inner membrane. It catalyses the reaction phosphate(out) + ATP + H2O = ADP + 2 phosphate(in) + H(+). Functionally, part of the ABC transporter complex PstSACB involved in phosphate import. Responsible for energy coupling to the transport system. The sequence is that of Phosphate import ATP-binding protein PstB 1 from Synechocystis sp. (strain ATCC 27184 / PCC 6803 / Kazusa).